Here is a 279-residue protein sequence, read N- to C-terminus: Movement protein (279 aa).

It belongs to the cucumovirus movement protein family.

It is found in the host cell junction. It localises to the host plasmodesma. In terms of biological role, transports viral genome to neighboring plant cells directly through plasmosdesmata, without any budding. The movement protein allows efficient cell to cell propagation, by bypassing the host cell wall barrier. Acts by forming a tubular structure at the host plasmodesmata, enlarging it enough to allow free passage of virion capsids. This Cucumber mosaic virus (strain C7-2) (CMV) protein is Movement protein.